The chain runs to 157 residues: Small ribosomal subunit protein bS16 (157 aa).

The interval 114-157 (NEGPTAEAITEKKKKAKEEAAAKAAAEAEAAAKAEEAPAEEAAE) is disordered.

It belongs to the bacterial ribosomal protein bS16 family.

The sequence is that of Small ribosomal subunit protein bS16 from Corynebacterium diphtheriae (strain ATCC 700971 / NCTC 13129 / Biotype gravis).